Consider the following 195-residue polypeptide: dITP/XTP pyrophosphatase (195 aa).

A substrate-binding site is contributed by 8–13 (SNNQGK). Mg(2+) contacts are provided by Glu-39 and Asp-68. The active-site Proton acceptor is the Asp-68. Residues Ser-69, 149–152 (FGYD), Lys-172, and 177–178 (HR) each bind substrate.

This sequence belongs to the HAM1 NTPase family. In terms of assembly, homodimer. Mg(2+) is required as a cofactor.

It carries out the reaction XTP + H2O = XMP + diphosphate + H(+). It catalyses the reaction dITP + H2O = dIMP + diphosphate + H(+). The enzyme catalyses ITP + H2O = IMP + diphosphate + H(+). Its function is as follows. Pyrophosphatase that catalyzes the hydrolysis of nucleoside triphosphates to their monophosphate derivatives, with a high preference for the non-canonical purine nucleotides XTP (xanthosine triphosphate), dITP (deoxyinosine triphosphate) and ITP. Seems to function as a house-cleaning enzyme that removes non-canonical purine nucleotides from the nucleotide pool, thus preventing their incorporation into DNA/RNA and avoiding chromosomal lesions. This is dITP/XTP pyrophosphatase from Staphylococcus aureus (strain Mu50 / ATCC 700699).